We begin with the raw amino-acid sequence, 183 residues long: NEDD8-conjugating enzyme Ubc12 (183 aa).

Met-1 carries the N-acetylmethionine modification. The tract at residues 1 to 29 is disordered; that stretch reads MIKLFSLKQQKKEEESAGGTKGSSKKASA. The tract at residues 1-57 is interaction with UBA3; it reads MIKLFSLKQQKKEEESAGGTKGSSKKASAAQLRIQKDINELNLPKTCDISFSDPDDL. The residue at position 3 (Lys-3) is an N6-acetyllysine. The region spanning 29–173 is the UBC core domain; the sequence is AAQLRIQKDI…VQRSMRGGYI (145 aa). Ser-50 carries the post-translational modification Phosphoserine. The Glycyl thioester intermediate role is filled by Cys-111. The residue at position 169 (Arg-169) is an Asymmetric dimethylarginine; alternate. Arg-169 carries the omega-N-methylarginine; alternate modification.

This sequence belongs to the ubiquitin-conjugating enzyme family. UBC12 subfamily. In terms of assembly, interacts with UBA3 and RBX1. Interacts (N-terminally acetylated form) with (via DCUN1 domain) DCUN1D1, DCUN1D2, DCUN1D3, DCUN1D4 and DCUN1D5. In terms of processing, the acetylation of Met-1 increases affinity for DCUN1D1 by about 2 orders of magnitude and is crucial for NEDD8 transfer to cullins.

The enzyme catalyses [E1 NEDD8-activating enzyme]-S-[NEDD8 protein]-yl-L-cysteine + [E2 NEDD8-conjugating enzyme]-L-cysteine = [E1 NEDD8-activating enzyme]-L-cysteine + [E2 NEDD8-conjugating enzyme]-S-[NEDD8-protein]-yl-L-cysteine.. The protein operates within protein modification; protein neddylation. Its function is as follows. Accepts the ubiquitin-like protein NEDD8 from the UBA3-NAE1 E1 complex and catalyzes its covalent attachment to other proteins. The specific interaction with the E3 ubiquitin ligase RBX1, but not RBX2, suggests that the RBX1-UBE2M complex neddylates specific target proteins, such as CUL1, CUL2, CUL3 and CUL4. Involved in cell proliferation. This chain is NEDD8-conjugating enzyme Ubc12 (Ube2m), found in Mus musculus (Mouse).